We begin with the raw amino-acid sequence, 194 residues long: Ras-related protein RabU (194 aa).

Position 19–27 (19–27 (GYDYECGIK)) interacts with GTP. Residues 42–50 (PESQVGVDF) carry the Effector region motif. GTP is bound by residues 68-72 (PQNKY) and 130-133 (NNSE).

Belongs to the small GTPase superfamily. Rab family.

The polypeptide is Ras-related protein RabU (rabU) (Dictyostelium discoideum (Social amoeba)).